Here is a 577-residue protein sequence, read N- to C-terminus: Arginine--tRNA ligase (577 aa).

The 'HIGH' region motif lies at 122 to 132 (PNVAKEMHVGH).

The protein belongs to the class-I aminoacyl-tRNA synthetase family. As to quaternary structure, monomer.

Its subcellular location is the cytoplasm. The enzyme catalyses tRNA(Arg) + L-arginine + ATP = L-arginyl-tRNA(Arg) + AMP + diphosphate. This Histophilus somni (strain 2336) (Haemophilus somnus) protein is Arginine--tRNA ligase.